The primary structure comprises 83 residues: Cobrotoxin (83 aa).

The signal sequence occupies residues 1–21 (MKTLLLTLLVVTIVCLDLGYT). Disulfide bonds link C24/C45, C38/C62, C64/C75, and C76/C81.

This sequence belongs to the three-finger toxin family. Short-chain subfamily. Type I alpha-neurotoxin sub-subfamily. In terms of tissue distribution, expressed by the venom gland.

The protein resides in the secreted. In terms of biological role, binds to muscle nicotinic acetylcholine receptor (nAChR) and inhibit acetylcholine from binding to the receptor, thereby impairing neuromuscular transmission. Has a higher toxicity than cobrotoxin-b. In vivo, when tested on rat arthritis models, shows anti-inflammation and immunosuppression effects. The polypeptide is Cobrotoxin (Naja atra (Chinese cobra)).